Reading from the N-terminus, the 575-residue chain is Beta-amylase 1, chloroplastic (575 aa).

A chloroplast-targeting transit peptide spans 1 to 41 (MALNLSHQLGVLAGTPIKSGEMTDSSLLSISPPSARMMTPK). Residues Ser-55 and Ser-59 each carry the phosphoserine modification. Cysteines 73 and 511 form a disulfide. Residues Asp-147, His-187, and Asp-195 each coordinate substrate. Residue Glu-279 is the Proton donor of the active site. Substrate-binding residues include Lys-392, His-397, and Thr-439. Glu-477 (proton acceptor) is an active-site residue. Residues 478–479 (NA) and Arg-517 contribute to the substrate site.

It belongs to the glycosyl hydrolase 14 family. In terms of tissue distribution, expressed in leaves, roots, flowers, pollen, and seeds.

The protein resides in the plastid. It is found in the chloroplast. The catalysed reaction is Hydrolysis of (1-&gt;4)-alpha-D-glucosidic linkages in polysaccharides so as to remove successive maltose units from the non-reducing ends of the chains.. Its activity is regulated as follows. Redox regulation; active in reducing conditions, inactive in oxidizing conditions. Thioredoxins f1, m1, and y1 mediate the reversible reductive activation of oxidized BAM1. Functionally, beta-amylase activity. Can use p-nitrophenyl maltopentaoside (PNPG5) as substrate only in reduced form. Can play a minor role in the starch degradation and maltose metabolism in chloroplasts during the night. More active on phosphorylated glucan. Interacts directly with starch or other alpha-1,4-glucan. The protein is Beta-amylase 1, chloroplastic (BAM1) of Arabidopsis thaliana (Mouse-ear cress).